We begin with the raw amino-acid sequence, 399 residues long: Glutamyl-tRNA reductase (399 aa).

Substrate-binding positions include 45 to 48 (TCNR), serine 93, 98 to 100 (EDQ), and glutamine 104. Cysteine 46 serves as the catalytic Nucleophile. Residue 173–178 (GAGKMG) participates in NADP(+) binding.

This sequence belongs to the glutamyl-tRNA reductase family. As to quaternary structure, homodimer.

The enzyme catalyses (S)-4-amino-5-oxopentanoate + tRNA(Glu) + NADP(+) = L-glutamyl-tRNA(Glu) + NADPH + H(+). The protein operates within porphyrin-containing compound metabolism; protoporphyrin-IX biosynthesis; 5-aminolevulinate from L-glutamyl-tRNA(Glu): step 1/2. Catalyzes the NADPH-dependent reduction of glutamyl-tRNA(Glu) to glutamate 1-semialdehyde (GSA). This is Glutamyl-tRNA reductase from Methanobrevibacter smithii (strain ATCC 35061 / DSM 861 / OCM 144 / PS).